The primary structure comprises 440 residues: Enolase (440 aa).

Gln-163 lines the (2R)-2-phosphoglycerate pocket. Glu-205 acts as the Proton donor in catalysis. Positions 242, 288, and 315 each coordinate Mg(2+). Lys-340, Arg-369, Ser-370, and Lys-391 together coordinate (2R)-2-phosphoglycerate. Lys-340 acts as the Proton acceptor in catalysis.

The protein belongs to the enolase family. Mg(2+) is required as a cofactor.

It localises to the cytoplasm. The protein localises to the secreted. Its subcellular location is the cell surface. The catalysed reaction is (2R)-2-phosphoglycerate = phosphoenolpyruvate + H2O. It participates in carbohydrate degradation; glycolysis; pyruvate from D-glyceraldehyde 3-phosphate: step 4/5. Functionally, catalyzes the reversible conversion of 2-phosphoglycerate (2-PG) into phosphoenolpyruvate (PEP). It is essential for the degradation of carbohydrates via glycolysis. The protein is Enolase of Pediococcus pentosaceus (strain ATCC 25745 / CCUG 21536 / LMG 10740 / 183-1w).